A 911-amino-acid chain; its full sequence is Valine--tRNA ligase (911 aa).

Residues 57–67 (PTVSGSLHVGH) carry the 'HIGH' region motif. The 'KMSKS' region signature appears at 599–603 (KMSKS). K602 lines the ATP pocket. Residues 882 to 911 (EESAAEDAPETEVAVEASELGEPPVKKPKH) form a disordered region.

Belongs to the class-I aminoacyl-tRNA synthetase family. ValS type 2 subfamily. As to quaternary structure, monomer.

The protein localises to the cytoplasm. The catalysed reaction is tRNA(Val) + L-valine + ATP = L-valyl-tRNA(Val) + AMP + diphosphate. Catalyzes the attachment of valine to tRNA(Val). As ValRS can inadvertently accommodate and process structurally similar amino acids such as threonine, to avoid such errors, it has a 'posttransfer' editing activity that hydrolyzes mischarged Thr-tRNA(Val) in a tRNA-dependent manner. In Bifidobacterium longum subsp. infantis (strain ATCC 15697 / DSM 20088 / JCM 1222 / NCTC 11817 / S12), this protein is Valine--tRNA ligase.